The sequence spans 313 residues: Porphobilinogen deaminase (313 aa).

At Cys242 the chain carries S-(dipyrrolylmethanemethyl)cysteine.

It belongs to the HMBS family. As to quaternary structure, monomer. Requires dipyrromethane as cofactor.

It catalyses the reaction 4 porphobilinogen + H2O = hydroxymethylbilane + 4 NH4(+). The protein operates within porphyrin-containing compound metabolism; protoporphyrin-IX biosynthesis; coproporphyrinogen-III from 5-aminolevulinate: step 2/4. Its function is as follows. Tetrapolymerization of the monopyrrole PBG into the hydroxymethylbilane pre-uroporphyrinogen in several discrete steps. This chain is Porphobilinogen deaminase, found in Pseudomonas syringae pv. tomato (strain ATCC BAA-871 / DC3000).